Consider the following 395-residue polypeptide: Beta-1,4-galactosyltransferase 3 (395 aa).

At 1–10 (MLRRLLERPC) the chain is on the cytoplasmic side. Residues 11-31 (TLALLVGSQLAVMMYLSLGGF) traverse the membrane as a helical; Signal-anchor for type II membrane protein segment. The Lumenal portion of the chain corresponds to 32–395 (RSLSALFGRD…ANHTAPHGSH (364 aa)). The N-linked (GlcNAc...) asparagine glycan is linked to N57. C79 and C121 are joined by a disulfide. 132-136 (PHRAR) is a UDP-alpha-D-galactose binding site. Residue N168 is glycosylated (N-linked (GlcNAc...) asparagine). UDP-alpha-D-galactose-binding positions include 171–173 (FNR), 198–199 (VD), Y228, and W260. Residues C192 and C211 are joined by a disulfide bond. D199 provides a ligand contact to Mn(2+). 262 to 265 (GEDD) is an N-acetyl-D-glucosamine binding site. H293 contributes to the Mn(2+) binding site. 293–295 (HRG) provides a ligand contact to UDP-alpha-D-galactose. Position 305 (R305) interacts with N-acetyl-D-glucosamine. N-linked (GlcNAc...) asparagine glycosylation is found at N339 and N387. Positions 341–395 (TADIGTDPRGPRAPSGPRYPPGSSQAFRQEMLQRRPPARPGPLPTANHTAPHGSH) are disordered.

It belongs to the glycosyltransferase 7 family. Mn(2+) serves as cofactor.

It is found in the golgi apparatus. The protein resides in the golgi stack membrane. It carries out the reaction an N-acetyl-beta-D-glucosaminyl derivative + UDP-alpha-D-galactose = a beta-D-galactosyl-(1-&gt;4)-N-acetyl-beta-D-glucosaminyl derivative + UDP + H(+). The catalysed reaction is N-acetyl-D-glucosamine + UDP-alpha-D-galactose = beta-D-galactosyl-(1-&gt;4)-N-acetyl-D-glucosamine + UDP + H(+). The enzyme catalyses a beta-D-GlcNAc-(1-&gt;3)-beta-D-Gal-(1-&gt;4)-beta-D-Glc-(1&lt;-&gt;1)-Cer(d18:1(4E)) + UDP-alpha-D-galactose = a neolactoside nLc4Cer(d18:1(4E)) + UDP + H(+). It catalyses the reaction a beta-D-glucosylceramide + UDP-alpha-D-galactose = a beta-D-galactosyl-(1-&gt;4)-beta-D-glucosyl-(1&lt;-&gt;1)-ceramide + UDP + H(+). It carries out the reaction a neolactoside IV(3)-beta-GlcNAc-nLc4Cer + UDP-alpha-D-galactose = a neolactoside nLc6Cer + UDP + H(+). Its pathway is protein modification; protein glycosylation. Its function is as follows. Responsible for the synthesis of complex-type N-linked oligosaccharides in many glycoproteins as well as the carbohydrate moieties of glycolipids. This chain is Beta-1,4-galactosyltransferase 3, found in Rattus norvegicus (Rat).